Consider the following 179-residue polypeptide: NADH dehydrogenase [ubiquinone] 1 beta subcomplex subunit 9 (179 aa).

N-acetylalanine is present on alanine 2. The residue at position 85 (serine 85) is a Phosphoserine. The disordered stretch occupies residues 136-162 (EVKQLQEETPPGGPLTEALPPARKEGD).

The protein belongs to the complex I LYR family. Mammalian complex I is composed of 45 different subunits.

Its subcellular location is the mitochondrion inner membrane. Its function is as follows. Accessory subunit of the mitochondrial membrane respiratory chain NADH dehydrogenase (Complex I), that is believed to be not involved in catalysis. Complex I functions in the transfer of electrons from NADH to the respiratory chain. The immediate electron acceptor for the enzyme is believed to be ubiquinone. The chain is NADH dehydrogenase [ubiquinone] 1 beta subcomplex subunit 9 (NDUFB9) from Pongo abelii (Sumatran orangutan).